The sequence spans 100 residues: MATYKVTLINEEEGINAILEVADDQTILDAGEEAGLDLPSSCRAGSCSTCAGKLVSGAAPNQDDQAFLDDDQLAAGWVMTCVAYPTGDCTIMTHQESEVL.

Residues Y4–S97 form the 2Fe-2S ferredoxin-type domain. Positions 42, 47, 50, and 81 each coordinate [2Fe-2S] cluster.

It belongs to the 2Fe2S plant-type ferredoxin family. [2Fe-2S] cluster serves as cofactor.

In terms of biological role, ferredoxins are iron-sulfur proteins that transfer electrons in a wide variety of metabolic reactions. The chain is Ferredoxin-2 from Aphanothece sacrum.